Reading from the N-terminus, the 359-residue chain is Fructose-bisphosphate aldolase class 2 (359 aa).

Ser61 provides a ligand contact to D-glyceraldehyde 3-phosphate. Catalysis depends on Asp110, which acts as the Proton donor. Zn(2+)-binding residues include His111, Asp145, Glu175, and His227. Gly228 is a dihydroxyacetone phosphate binding site. His265 is a Zn(2+) binding site. Dihydroxyacetone phosphate contacts are provided by residues 266–268 (GGS) and 287–290 (NIDT).

Belongs to the class II fructose-bisphosphate aldolase family. Requires Zn(2+) as cofactor.

The catalysed reaction is beta-D-fructose 1,6-bisphosphate = D-glyceraldehyde 3-phosphate + dihydroxyacetone phosphate. The protein operates within carbohydrate degradation; glycolysis; D-glyceraldehyde 3-phosphate and glycerone phosphate from D-glucose: step 4/4. Catalyzes the aldol condensation of dihydroxyacetone phosphate (DHAP or glycerone-phosphate) with glyceraldehyde 3-phosphate (G3P) to form fructose 1,6-bisphosphate (FBP) in gluconeogenesis and the reverse reaction in glycolysis. The protein is Fructose-bisphosphate aldolase class 2 (fbaA) of Buchnera aphidicola subsp. Schizaphis graminum (strain Sg).